A 133-amino-acid polypeptide reads, in one-letter code: Small ribosomal subunit protein uS11 (133 aa).

It belongs to the universal ribosomal protein uS11 family. Part of the 30S ribosomal subunit. Interacts with proteins S7 and S18. Binds to IF-3.

Functionally, located on the platform of the 30S subunit, it bridges several disparate RNA helices of the 16S rRNA. Forms part of the Shine-Dalgarno cleft in the 70S ribosome. The protein is Small ribosomal subunit protein uS11 of Cupriavidus metallidurans (strain ATCC 43123 / DSM 2839 / NBRC 102507 / CH34) (Ralstonia metallidurans).